We begin with the raw amino-acid sequence, 350 residues long: Serine-threonine kinase receptor-associated protein (350 aa).

7 WD repeats span residues 12–56, 57–96, 98–137, 141–179, 180–212, 221–262, and 263–302; these read GHTR…GTFL, GHKGAVWGATLNKDATKAATAAADFTAKVWDAVSGDELIT, AHKHIVKSVDFTQDSNYLLTGGQDKLLRIYDLSKPEAEPD, GHTSGIKKALWSSDDKQILSADDKTVRLWDRSTMTEVKA, LNVAMSVSSMEYVPEGQILVITYGKTIAFHSAE, EAPA…ESYK, and GHFGPIHCVRFSPDGELYASGSEDGTLRLWQTTVGKTYGL. The disordered stretch occupies residues 311 to 350; that stretch reads ENAEAAKARTTLPGTAEEEIEEVASENSDSVYSSTPEVKA. A compositionally biased stretch (polar residues) spans 335–350; sequence SENSDSVYSSTPEVKA.

Belongs to the WD repeat STRAP family. Part of the core SMN complex.

The protein resides in the cytoplasm. Its subcellular location is the nucleus. The SMN complex catalyzes the assembly of small nuclear ribonucleoproteins (snRNPs), the building blocks of the spliceosome, and thereby plays an important role in the splicing of cellular pre-mRNAs. Most spliceosomal snRNPs contain a common set of Sm proteins SNRPB, SNRPD1, SNRPD2, SNRPD3, SNRPE, SNRPF and SNRPG that assemble in a heptameric protein ring on the Sm site of the small nuclear RNA to form the core snRNP (Sm core). In the cytosol, the Sm proteins SNRPD1, SNRPD2, SNRPE, SNRPF and SNRPG are trapped in an inactive 6S pICln-Sm complex by the chaperone CLNS1A that controls the assembly of the core snRNP. To assemble core snRNPs, the SMN complex accepts the trapped 5Sm proteins from CLNS1A forming an intermediate. Binding of snRNA inside 5Sm triggers eviction of the SMN complex, thereby allowing binding of SNRPD3 and SNRPB to complete assembly of the core snRNP. STRAP plays a role in the cellular distribution of the SMN complex. The protein is Serine-threonine kinase receptor-associated protein (STRAP) of Gallus gallus (Chicken).